Here is a 426-residue protein sequence, read N- to C-terminus: Histidine--tRNA ligase (426 aa).

The protein belongs to the class-II aminoacyl-tRNA synthetase family.

Its subcellular location is the cytoplasm. It catalyses the reaction tRNA(His) + L-histidine + ATP = L-histidyl-tRNA(His) + AMP + diphosphate + H(+). The chain is Histidine--tRNA ligase from Saccharolobus islandicus (strain L.S.2.15 / Lassen #1) (Sulfolobus islandicus).